The sequence spans 697 residues: Potassium-transporting ATPase ATP-binding subunit (697 aa).

4 helical membrane-spanning segments follow: residues 55–75, 79–99, 245–265, and 271–291; these read PIMFVVEIGFVITFILSFFPS, SIPGWFNITVSLILLFTVLFA, LTLIFLIVVVTLPIFTNYLGF, and VLVALLVCLIPTTIGGLLSAI. Asp324 (4-aspartylphosphate intermediate) is an active-site residue. ATP is bound by residues Asp361, Glu365, 393 to 400, and Lys412; that span reads FKAETRMS. Mg(2+) contacts are provided by Asp535 and Asp539. 3 helical membrane-spanning segments follow: residues 605-625, 633-653, and 677-697; these read FAIIPAMFTLAIPQMEALNIM, AILSALLFNAVIIPLLIPLAM, and GGVIVPFIGIKVIDIIVGLFI.

It belongs to the cation transport ATPase (P-type) (TC 3.A.3) family. Type IA subfamily. As to quaternary structure, the system is composed of three essential subunits: KdpA, KdpB and KdpC.

It localises to the cell membrane. It carries out the reaction K(+)(out) + ATP + H2O = K(+)(in) + ADP + phosphate + H(+). Part of the high-affinity ATP-driven potassium transport (or Kdp) system, which catalyzes the hydrolysis of ATP coupled with the electrogenic transport of potassium into the cytoplasm. This subunit is responsible for energy coupling to the transport system and for the release of the potassium ions to the cytoplasm. This Bacillus cereus (strain AH820) protein is Potassium-transporting ATPase ATP-binding subunit.